The chain runs to 157 residues: SsrA-binding protein (157 aa).

A compositionally biased stretch (basic and acidic residues) spans 138–151 (ATEAKRDWGREKQR). The tract at residues 138 to 157 (ATEAKRDWGREKQRLLKQHS) is disordered.

Belongs to the SmpB family.

It is found in the cytoplasm. Required for rescue of stalled ribosomes mediated by trans-translation. Binds to transfer-messenger RNA (tmRNA), required for stable association of tmRNA with ribosomes. tmRNA and SmpB together mimic tRNA shape, replacing the anticodon stem-loop with SmpB. tmRNA is encoded by the ssrA gene; the 2 termini fold to resemble tRNA(Ala) and it encodes a 'tag peptide', a short internal open reading frame. During trans-translation Ala-aminoacylated tmRNA acts like a tRNA, entering the A-site of stalled ribosomes, displacing the stalled mRNA. The ribosome then switches to translate the ORF on the tmRNA; the nascent peptide is terminated with the 'tag peptide' encoded by the tmRNA and targeted for degradation. The ribosome is freed to recommence translation, which seems to be the essential function of trans-translation. The polypeptide is SsrA-binding protein (Cereibacter sphaeroides (strain ATCC 17025 / ATH 2.4.3) (Rhodobacter sphaeroides)).